The sequence spans 747 residues: Polyribonucleotide nucleotidyltransferase (747 aa).

Positions 487 and 493 each coordinate Mg(2+). The KH domain occupies 554–613 (PSTTTIKIDKDKIRDVIGPGGKVIKEICETSDAKIDISDDGTVSVYASDRDKLKVALDKI). The 69-residue stretch at 623–691 (GEIFNGTVMK…NKGKAKLTIK (69 aa)) folds into the S1 motif domain. A disordered region spans residues 691-747 (KNADKDKSSNNPKQKNNVNNSKENSEPERRDSSKKRAWNEDNNSDTTEVITERKYFN). A compositionally biased stretch (low complexity) spans 699 to 712 (SNNPKQKNNVNNSK). Polar residues predominate over residues 730–739 (EDNNSDTTEV).

Belongs to the polyribonucleotide nucleotidyltransferase family. The cofactor is Mg(2+).

It localises to the cytoplasm. The catalysed reaction is RNA(n+1) + phosphate = RNA(n) + a ribonucleoside 5'-diphosphate. In terms of biological role, involved in mRNA degradation. Catalyzes the phosphorolysis of single-stranded polyribonucleotides processively in the 3'- to 5'-direction. This is Polyribonucleotide nucleotidyltransferase from Rickettsia akari (strain Hartford).